Here is a 451-residue protein sequence, read N- to C-terminus: Phosphoglucosamine mutase (451 aa).

The active-site Phosphoserine intermediate is the Ser-101. Residues Ser-101, Asp-240, Asp-242, and Asp-244 each contribute to the Mg(2+) site. A Phosphoserine modification is found at Ser-101.

Belongs to the phosphohexose mutase family. Mg(2+) serves as cofactor. Post-translationally, activated by phosphorylation.

It catalyses the reaction alpha-D-glucosamine 1-phosphate = D-glucosamine 6-phosphate. Its function is as follows. Catalyzes the conversion of glucosamine-6-phosphate to glucosamine-1-phosphate. This Streptococcus pyogenes serotype M12 (strain MGAS2096) protein is Phosphoglucosamine mutase.